The chain runs to 67 residues: Conotoxin TsMMSK-011 (67 aa).

Positions 1 to 20 (MMSKLGVLLTICLLLFPLTA) are cleaved as a signal peptide. Residues 21–50 (VQLDGDQPADLPALRTQDIATDHSPWFDPV) constitute a propeptide that is removed on maturation. Disulfide bonds link C53/C65, C54/C61, and C58/C64. The residue at position 63 (P63) is a 4-hydroxyproline.

This sequence belongs to the conotoxin M superfamily. In terms of tissue distribution, expressed by the venom duct.

It localises to the secreted. This Conus tessulatus (Tessellate cone) protein is Conotoxin TsMMSK-011.